A 373-amino-acid chain; its full sequence is Putative ribosome biogenesis protein C8F11.04 (373 aa).

A disordered region spans residues 265–373 (RKVVTKETAS…VKAGKNKVKH (109 aa)). The span at 292 to 320 (KVEVAKESKDSKQQNVSDKKQVTVKEVPK) shows a compositional bias: basic and acidic residues. Residues 347–359 (KVSQSSLKANGTT) are compositionally biased toward polar residues. The segment covering 362 to 373 (KKVKAGKNKVKH) has biased composition (basic residues).

This sequence belongs to the universal ribosomal protein uL1 family. Highly divergent. Component of the 90S pre-ribosomes.

Its subcellular location is the nucleus. The protein resides in the nucleolus. Involved in rRNA-processing and ribosome biosynthesis. This is Putative ribosome biogenesis protein C8F11.04 from Schizosaccharomyces pombe (strain 972 / ATCC 24843) (Fission yeast).